A 326-amino-acid chain; its full sequence is RNA/RNP complex-1-interacting phosphatase (326 aa).

The segment at 1 to 28 (MNQWHYGRYSRGRDFTARAPPKKKGKNQ) is disordered. A Tyrosine-protein phosphatase domain is found at 59–206 (FEAKLMPEEC…LQKRRVRKNQ (148 aa)). The active-site Phosphocysteine intermediate is the Cys150. Position 151-156 (151-156 (THGLNR)) interacts with substrate. Residue Arg156 is the Proton donor/acceptor of the active site. Residues 200–258 (RRVRKNQNASASRSGGLEDSAHLTEQVHTTNKPVNKGPKKSRRGGHLESSQHVQTQSSA) form a disordered region. Residues 247–258 (ESSQHVQTQSSA) are compositionally biased toward polar residues.

Belongs to the protein-tyrosine phosphatase family. Non-receptor class dual specificity subfamily. Monomer. May interact with SFRS7 and SFRS9/SRP30C.

It is found in the nucleus. The protein localises to the nucleus speckle. Possesses RNA 5'-triphosphatase and diphosphatase activities, but displays a poor protein-tyrosine phosphatase activity. In addition, has phosphatase activity with ATP, ADP and O-methylfluorescein phosphate (in vitro). Binds to RNA. May participate in nuclear mRNA metabolism. In Rattus norvegicus (Rat), this protein is RNA/RNP complex-1-interacting phosphatase (Dusp11).